The primary structure comprises 390 residues: 3,5-dihydroxyphenylacetyl-CoA synthase (390 aa).

Residue cysteine 173 is part of the active site.

The protein belongs to the thiolase-like superfamily. Chalcone/stilbene synthases family.

It carries out the reaction 4 malonyl-CoA + 4 H(+) = (3,5-dihydroxyphenyl)acetyl-CoA + 4 CO2 + 3 CoA + H2O. It functions in the pathway antibiotic biosynthesis; vancomycin biosynthesis. Functionally, involved in the biosynthesis of the nonproteinogenic amino acid monomer (S)-3,5-dihydroxyphenylglycine (Dpg) responsible of the production of vancomycin and teicoplanin antibiotics. Catalyzes the Claisen condensation of four molecules of malonyl-CoA to yield 3,5-dihydroxyphenylacetyl-CoA (DPA-CoA) and three free coenzyme A (CoA). DpgA requires the presence of the dehydratases DpgB and DpgD to facilitate the aromatization of the DPA-S-DgpA or DPA-S-CoA intermediate. This Streptomyces toyocaensis protein is 3,5-dihydroxyphenylacetyl-CoA synthase.